We begin with the raw amino-acid sequence, 210 residues long: Large ribosomal subunit protein uL3 (210 aa).

Residues 126-152 (HGFRGGPKTHGQSDRHRAPGSIGAGTT) are disordered.

It belongs to the universal ribosomal protein uL3 family. As to quaternary structure, part of the 50S ribosomal subunit. Forms a cluster with proteins L14 and L19.

One of the primary rRNA binding proteins, it binds directly near the 3'-end of the 23S rRNA, where it nucleates assembly of the 50S subunit. The protein is Large ribosomal subunit protein uL3 of Chloroflexus aurantiacus (strain ATCC 29366 / DSM 635 / J-10-fl).